The primary structure comprises 69 residues: Ferredoxin-1 (69 aa).

[3Fe-4S] cluster contacts are provided by C12, C18, and C57.

[3Fe-4S] cluster is required as a cofactor.

Functionally, electron transport protein for the cytochrome P-450-SU1 system. This is Ferredoxin-1 (suaB) from Streptomyces griseolus.